We begin with the raw amino-acid sequence, 909 residues long: WD repeat-containing protein 20 homolog (909 aa).

The segment at 58–132 is disordered; sequence SPAQGKLGSD…SAGNNTVEAR (75 aa). Composition is skewed to low complexity over residues 80–107 and 115–127; these read GANTTTTNGSSPGASPTGAAGASTAISN and SHSNHNSNSAGNN. 4 WD repeats span residues 248–288, 321–362, 363–402, and 470–517; these read IDKT…AATA, TDNC…GIAR, SYFGGFLCVCWSPDGKYIVVGGEDDLVTVWSLHERRVVAR, and ADRN…LRHP. Disordered regions lie at residues 458–483, 554–628, 661–699, 720–739, and 749–775; these read FEGFDRNSTPVHADRNGPHSASFRSD, SGQA…AGSV, SDSIDGGGGSGSGQRPSQTTSGYNSKTSNSSNKSSNSGS, SEKKGAGYEGSHSTAHRQHR, and NQHNHTGGHNNHSQSNNSSSSNFGHSS. Composition is skewed to polar residues over residues 555–569 and 595–606; these read GQATGQQAESGSCSP and TANCTISSQSSP. Composition is skewed to low complexity over residues 612–628 and 673–699; these read EAATPASTSSNAGAGSV and GQRPSQTTSGYNSKTSNSSNKSSNSGS. A WD 5 repeat occupies 856-893; it reads IAHERLTALIFREDCFLTACQDGFIYTWARPGHATHAT.

In terms of assembly, component of the Usp12-46 deubiquitylase complex consisting of Usp12-46, Wdr20 and Uaf1; regulatory subunit that, together with Uaf1, stabilizes Usp12-46. The Usp12-46 deubiquitylase complex associates with arr/arrow; the interaction leads to deubiquitination and stabilization of arr/arrow.

Regulatory component of the Usp12-46 deubiquitylase complex. This complex deubiquitylates the wg/wingless-signaling receptor arr/arrow, which stabilizes the receptor and increases its concentration at the cell surface; this enhances the sensitivity of cells to wg/wingless-signal stimulation. This increases the amplitude and spatial range of the signaling response to the wg/wingless morphogen gradient, facilitating the precise concentration-dependent regulation of its target genes. Required for wg/wingless-mediated signaling in the wing imaginal disc and for wg/wingless-dependent regulation of intestinal stem cell proliferation. This chain is WD repeat-containing protein 20 homolog, found in Drosophila melanogaster (Fruit fly).